Reading from the N-terminus, the 414-residue chain is ZP domain-containing protein (414 aa).

Residues 1–17 (MFLYSFVFLMLLGLSSA) form the signal peptide. The disordered stretch occupies residues 18 to 65 (QTESATSPDEVETEPTMSTDQPETSPSMSTETEPTTETPPVTTPPPPD). The Extracellular segment spans residues 18–364 (QTESATSPDE…GAQEAVSSLT (347 aa)). Residues 39–57 (PETSPSMSTETEPTTETPP) show a composition bias toward low complexity. Positions 70–323 (ICTNEKMEVF…SRCAKGCETS (254 aa)) constitute a ZP domain. Cysteines 241 and 302 form a disulfide. Residues 365–385 (IFAAVAGVLGVIVLFLAVALV) traverse the membrane as a helical segment. Over 386–414 (MLYKRYRSPQSATRVVYTKTANEEGKLLV) the chain is Cytoplasmic.

Component of the acid-insoluble and acid-soluble organic matrix of the aragonitic skeleton (at protein level).

It localises to the membrane. The polypeptide is ZP domain-containing protein (Acropora millepora (Staghorn coral)).